We begin with the raw amino-acid sequence, 447 residues long: Acyl-lipid (7-3)-desaturase (447 aa).

Positions 36–94 constitute a Cytochrome b5 heme-binding domain; sequence LTIVGDSVYDAKAFRSEHPGGAHFVSLFGGRDATEAFMEYHRRAWPKSRMSRFHVGSLA. Heme is bound by residues histidine 53 and histidine 76. Transmembrane regions (helical) follow at residues 123 to 143, 154 to 174, and 185 to 205; these read GFAP…AIAL, LLPS…IQHD, and SVNL…ILWL. The Histidine box-1 signature appears at 173-177; the sequence is HDANH. The Histidine box-2 signature appears at 208-213; it reads HVVMHH. 3 helical membrane-spanning segments follow: residues 244-264, 286-306, and 315-335; these read WLQH…LLFL, LFMP…ALPL, and AVCI…FFFI. Residues 386–390 carry the Histidine box-3 motif; sequence QIEHH.

It belongs to the fatty acid desaturase type 1 family. It depends on Fe(2+) as a cofactor.

The protein localises to the membrane. It carries out the reaction a (7Z,10Z,13Z,16Z,19Z)-docosapentaenoyl-containing glycerolipid + 2 Fe(II)-[cytochrome b5] + O2 + 2 H(+) = a (4Z,7Z,10Z,13Z,16Z,19Z)-docosahexaenoyl-containing glycerolipid + 2 Fe(III)-[cytochrome b5] + 2 H2O. The enzyme catalyses a (7Z,10Z,13Z,16Z)-docosatetraenoyl-containing glycerolipid + 2 Fe(II)-[cytochrome b5] + O2 + 2 H(+) = a (4Z,7Z,10Z,13Z,16Z)-docosapentaenoyl-containing glycerolipid + 2 Fe(III)-[cytochrome b5] + 2 H2O. Its function is as follows. Fatty acid desaturase that introduces a cis double bond at the 4-position in 22-carbon polyunsaturated fatty acids that contain a Delta(7) double bond, resulting in the production of delta-4 desaturated fatty acid docosahexanoic acid (DHA). This is Acyl-lipid (7-3)-desaturase from Rebecca salina (Marine microalga).